The following is a 358-amino-acid chain: Tripartite motif-containing protein 54 (358 aa).

The RING-type zinc-finger motif lies at 26-82; it reads CPICLEMFSKPVVILPCQHNLCRKCANDVFQASNPLWQSRGSTTVSSGGRFRCPSCR. The segment at 121 to 163 adopts a B box-type zinc-finger fold; that stretch reads EQHLMCEEHEEEKINIYCLSCEVPTCSLCKVFGAHKDCEVAPL. Positions 126, 129, 149, and 155 each coordinate Zn(2+). Positions 168-211 are mediates microtubule-binding and homooligomerization; that stretch reads KRQKSELSDGIAMLVAGNDRVQAVITQMEEVCQTIEDNSRRQKQ. The stretch at 194-258 forms a coiled coil; it reads QMEEVCQTIE…LIRQYGDHLE (65 aa). In terms of domain architecture, COS spans 271–329; that stretch reads MEEPQMALYLQQAKELINKVGAMSKVELAGRPEPGYESMEQFTVSVEHVAEMLRTIDFQ. A disordered region spans residues 326 to 358; sequence IDFQPGASGEEEEVAPDGDEGSAGQEEERPDGP. Residues 334-345 are compositionally biased toward acidic residues; that stretch reads GEEEEVAPDGDE.

In terms of assembly, homooligomer and heterooligomer. Interacts with TRIM63 and probably with TRIM55. Interacts with tubulin.

It is found in the cytoplasm. It localises to the cytoskeleton. The protein resides in the myofibril. The protein localises to the sarcomere. Its subcellular location is the z line. May bind and stabilize microtubules during myotubes formation. In Pongo abelii (Sumatran orangutan), this protein is Tripartite motif-containing protein 54 (TRIM54).